The primary structure comprises 423 residues: Vitamin D3 receptor (423 aa).

The Zn(2+) site is built by Cys24, Cys27, Cys41, Cys44, Cys60, Cys66, Cys76, and Cys79. 2 NR C4-type zinc fingers span residues 24 to 44 and 60 to 84; these read CGVC…CEGC and CPFN…LKRC. Positions 24-89 form a DNA-binding region, nuclear receptor; it reads CGVCGDRATG…RLKRCVDIGM (66 aa). The tract at residues 97–126 is hinge; the sequence is DEEVQRKREMIMKRKEEEALKDSLRPKLSE. Residues 127–419 form the NR LBD domain; the sequence is EQQHIIAILL…LTPLVLEVFG (293 aa). Tyr143 lines the calcitriol pocket. The disordered stretch occupies residues 159-180; the sequence is MDGSTGSYSPRPTLSFSGNSSS. Residues 171-180 show a composition bias toward low complexity; the sequence is TLSFSGNSSS. Calcitriol is bound at residue Ser233. The tract at residues 242–260 is interaction with coactivator LXXLL motif; it reads KMIPGFRDLTSDDQIVLLK. Arg270, Ser274, His301, and His393 together coordinate calcitriol. The 9aaTAD motif lies at 412–420; sequence PLVLEVFGN.

It belongs to the nuclear hormone receptor family. NR1 subfamily. Homodimer in the absence of bound vitamin D3. Heterodimer with RXRA after vitamin D3 binding. Interacts with MED1 and NCOA6. Interacts with MED1, NCOA1, NCOA2, NCOA3 and NCOA6 coactivators, leading to a strong increase of transcription of target genes. Interacts with the corepressor NCOR1. Interacts with SNW1. Interacts with IRX4, the interaction does not affect its transactivation activity. Interacts with CRY1. Interacts with CRY2 in a ligand-dependent manner. In terms of processing, ubiquitinated by UBR5, leading to its degradation: UBR5 specifically recognizes and binds ligand-bound VDR when it is not associated with coactivators (NCOAs). In presence of NCOAs, the UBR5-degron is not accessible, preventing its ubiquitination and degradation. In terms of tissue distribution, detected in intestine and kidney.

It is found in the nucleus. It localises to the cytoplasm. Nuclear receptor for calcitriol, the active form of vitamin D3 which mediates the action of this vitamin on cells. Enters the nucleus upon vitamin D3 binding where it forms heterodimers with the retinoid X receptor/RXR. The VDR-RXR heterodimers bind to specific response elements on DNA and activate the transcription of vitamin D3-responsive target genes. Plays a central role in calcium homeostasis. Also functions as a receptor for the secondary bile acid lithocholic acid (LCA) and its metabolites. The polypeptide is Vitamin D3 receptor (Vdr) (Rattus norvegicus (Rat)).